Here is a 485-residue protein sequence, read N- to C-terminus: Caspid protein (485 aa).

N-linked (GlcNAc...) asparagine; by host glycosylation is found at Asn-5 and Asn-178. Residues 236–262 are particle formation; sequence IALTLFNLADTLLGGLPTELISSAGGQ. The N-linked (GlcNAc...) asparagine; by host glycan is linked to Asn-430. The oligomerization stretch occupies residues 453–478; that stretch reads TTSLGAGPVSISAVAVLAPHSALALL.

It belongs to the hepevirus capsid protein family. In terms of assembly, self-assembles to form the capsid. The capsid is dominated by dimers that define the 30 morphological units. Interacts with phosphorylated protein ORF3. Interacts with host TMEM134. Interacts with host ASGR1 and ASGR2; these interactions facilitate infection of host hepatocytes. Not N-glycosylated.

The protein resides in the virion. It localises to the host cytoplasm. The protein localises to the host endoplasmic reticulum. Its subcellular location is the host Golgi apparatus. It is found in the host cell surface. The protein resides in the host nucleus. Its function is as follows. Forms an icosahedral capsid with a T=1 symmetry and a 34 nm diameter. The capsid is composed of 60 copies linked to each other. Binds to the 5' end of the genomic RNA to mediate genome encapsidation. Binds to heparin surface proteoglycans (HSPGs) to mediate viral entry. Additionally, the interactions with host ASGR1 and ASGR2 facilitate viral infection of hepatocytes. Inhibits IFN production by blocking host TBK1-induced IRF3 phosphorylation. The nuclear form probably modulates host gene expression. The chain is Caspid protein from Hepatitis E virus (isolate Rhesus/HT-4) (HEV).